The sequence spans 430 residues: Aspartate--tRNA(Asp/Asn) ligase (430 aa).

L-aspartate is bound at residue Glu166. Positions Gln188–Lys191 are aspartate. Residue Arg210 participates in L-aspartate binding. Residues Arg210 to Glu212, Lys218 to Leu220, and Glu353 each bind ATP. The Mg(2+) site is built by Glu353 and Ser356. Positions 356 and 360 each coordinate L-aspartate. Gly401 to Arg404 lines the ATP pocket.

The protein belongs to the class-II aminoacyl-tRNA synthetase family. Type 2 subfamily. Homodimer. The cofactor is Mg(2+).

It is found in the cytoplasm. It carries out the reaction tRNA(Asx) + L-aspartate + ATP = L-aspartyl-tRNA(Asx) + AMP + diphosphate. Functionally, aspartyl-tRNA synthetase with relaxed tRNA specificity since it is able to aspartylate not only its cognate tRNA(Asp) but also tRNA(Asn). Reaction proceeds in two steps: L-aspartate is first activated by ATP to form Asp-AMP and then transferred to the acceptor end of tRNA(Asp/Asn). This Methanospirillum hungatei JF-1 (strain ATCC 27890 / DSM 864 / NBRC 100397 / JF-1) protein is Aspartate--tRNA(Asp/Asn) ligase.